Reading from the N-terminus, the 467-residue chain is tRNA modification GTPase MnmE (467 aa).

(6S)-5-formyl-5,6,7,8-tetrahydrofolate is bound by residues R27, E89, and R128. A TrmE-type G domain is found at 225-387; sequence GISMVIAGRP…LKQAIFTVVT (163 aa). N235 is a binding site for K(+). GTP contacts are provided by residues 235–240, 254–260, 279–282, and 368–370; these read NVGKSS, TSIAGTT, DTAG, and SAR. Residue S239 coordinates Mg(2+). Residues T254, I256, and T259 each contribute to the K(+) site. T260 provides a ligand contact to Mg(2+). K467 is a (6S)-5-formyl-5,6,7,8-tetrahydrofolate binding site.

Belongs to the TRAFAC class TrmE-Era-EngA-EngB-Septin-like GTPase superfamily. TrmE GTPase family. As to quaternary structure, homodimer. Heterotetramer of two MnmE and two MnmG subunits. It depends on K(+) as a cofactor.

It localises to the cytoplasm. In terms of biological role, exhibits a very high intrinsic GTPase hydrolysis rate. Involved in the addition of a carboxymethylaminomethyl (cmnm) group at the wobble position (U34) of certain tRNAs, forming tRNA-cmnm(5)s(2)U34. In Desulfotalea psychrophila (strain LSv54 / DSM 12343), this protein is tRNA modification GTPase MnmE.